A 67-amino-acid chain; its full sequence is Alpha-like toxin Lqh3 (67 aa).

Residues 2–66 (RDGYIAQPEN…GIIVEGEKCH (65 aa)) form the LCN-type CS-alpha/beta domain. 4 disulfide bridges follow: C12–C65, C16–C37, C23–C47, and C27–C49. The residue at position 67 (S67) is a Serine amide.

The protein belongs to the long (4 C-C) scorpion toxin superfamily. Sodium channel inhibitor family. Alpha subfamily. Monomer. As to expression, expressed by the venom gland.

Its subcellular location is the secreted. In terms of biological role, alpha toxins bind voltage-independently at site-3 of sodium channels (Nav) and inhibit the inactivation of the activated channels, thereby blocking neuronal transmission. The dissociation is voltage-dependent. This alpha-like toxin is highly toxic to insects and competes with LqhaIT on binding to insect sodium channels. Differs from classical anti-mammalian alpha-toxins as it inhibits sodium channel inactivation in cell bodies of hippocampus brain neurons, on which the anti-mammalian Lqh2 is inactive, and is unable to affect Nav1.2 in the rat brain, on which Lqh2 is highly active. Moreover, its pharmacological properties are unique in that its binding affinity for insect channels drops &gt;30-fold at pH 8.5 versus pH 6.5, and its rate of association with receptor site-3 on both insect and mammalian sodium channels is 4-15-fold slower compared with LqhaIT and Lqh2. This chain is Alpha-like toxin Lqh3, found in Leiurus hebraeus (Hebrew deathstalker scorpion).